We begin with the raw amino-acid sequence, 496 residues long: Autophagy-related protein 21 (496 aa).

Residues 41 to 86 are disordered; sequence SKKKTSNNNGSASNSESRNNEESILITNGSRDRTDAEEEEDNEDNA. Residues 46–57 are compositionally biased toward low complexity; the sequence is SNNNGSASNSES. A compositionally biased stretch (acidic residues) spans 75–84; that stretch reads DAEEEEDNED. Phosphothreonine is present on Thr-213. Position 237 is a phosphoserine (Ser-237). 3 WD repeats span residues 294-334, 346-385, and 448-488; these read VHKG…DYMS, TRLC…NSLP, and VNES…GECV. Positions 342 to 346 match the L/FRRG motif motif; that stretch reads FRRGT.

It belongs to the WD repeat PROPPIN family.

It localises to the cytoplasm. It is found in the vacuole. Its function is as follows. Required for cytoplasm to vacuole transport (Cvt) vesicles formation and mitophagy. Involved in binding of phosphatidylethanolamine to ATG8 and in recruitment of ATG8 and ATG5 to the pre-autophagosomal structure. Protects ATG8 from ARG4-mediated cleavage. Essential for maturation of proaminopeptidase I. This Saccharomyces cerevisiae (strain ATCC 204508 / S288c) (Baker's yeast) protein is Autophagy-related protein 21 (ATG21).